A 245-amino-acid polypeptide reads, in one-letter code: 1-(5-phosphoribosyl)-5-[(5-phosphoribosylamino)methylideneamino] imidazole-4-carboxamide isomerase (245 aa).

Residue D8 is the Proton acceptor of the active site. Catalysis depends on D130, which acts as the Proton donor.

It belongs to the HisA/HisF family.

Its subcellular location is the cytoplasm. It catalyses the reaction 1-(5-phospho-beta-D-ribosyl)-5-[(5-phospho-beta-D-ribosylamino)methylideneamino]imidazole-4-carboxamide = 5-[(5-phospho-1-deoxy-D-ribulos-1-ylimino)methylamino]-1-(5-phospho-beta-D-ribosyl)imidazole-4-carboxamide. It participates in amino-acid biosynthesis; L-histidine biosynthesis; L-histidine from 5-phospho-alpha-D-ribose 1-diphosphate: step 4/9. This is 1-(5-phosphoribosyl)-5-[(5-phosphoribosylamino)methylideneamino] imidazole-4-carboxamide isomerase from Pseudomonas fluorescens (strain ATCC BAA-477 / NRRL B-23932 / Pf-5).